A 285-amino-acid chain; its full sequence is Homeobox protein Hox-A13b (285 aa).

The segment at residues 219 to 278 (GRKKRVPYTKVQLKELEREYAANKFITKDKRRRISAQTNLTERQVTIWFQNRRVKEKKVV) is a DNA-binding region (homeobox).

This sequence belongs to the Abd-B homeobox family.

The protein localises to the nucleus. In terms of biological role, sequence-specific transcription factor which is part of a developmental regulatory system that provides cells with specific positional identities on the anterior-posterior axis. The polypeptide is Homeobox protein Hox-A13b (hoxa13b) (Takifugu rubripes (Japanese pufferfish)).